A 1119-amino-acid polypeptide reads, in one-letter code: DNA-directed RNA polymerase subunit beta (1119 aa).

The protein belongs to the RNA polymerase beta chain family. In terms of assembly, the RNAP catalytic core consists of 2 alpha, 1 beta, 1 beta' and 1 omega subunit. When a sigma factor is associated with the core the holoenzyme is formed, which can initiate transcription.

The catalysed reaction is RNA(n) + a ribonucleoside 5'-triphosphate = RNA(n+1) + diphosphate. DNA-dependent RNA polymerase catalyzes the transcription of DNA into RNA using the four ribonucleoside triphosphates as substrates. The polypeptide is DNA-directed RNA polymerase subunit beta (Thermus thermophilus (strain ATCC 27634 / DSM 579 / HB8)).